We begin with the raw amino-acid sequence, 318 residues long: Aspartate carbamoyltransferase catalytic subunit (318 aa).

Arginine 58 and threonine 59 together coordinate carbamoyl phosphate. Lysine 86 is a binding site for L-aspartate. Arginine 108, histidine 141, and glutamine 144 together coordinate carbamoyl phosphate. L-aspartate-binding residues include arginine 174 and arginine 226. Carbamoyl phosphate-binding residues include glycine 270 and proline 271.

It belongs to the aspartate/ornithine carbamoyltransferase superfamily. ATCase family. Heterododecamer (2C3:3R2) of six catalytic PyrB chains organized as two trimers (C3), and six regulatory PyrI chains organized as three dimers (R2).

The enzyme catalyses carbamoyl phosphate + L-aspartate = N-carbamoyl-L-aspartate + phosphate + H(+). Its pathway is pyrimidine metabolism; UMP biosynthesis via de novo pathway; (S)-dihydroorotate from bicarbonate: step 2/3. In terms of biological role, catalyzes the condensation of carbamoyl phosphate and aspartate to form carbamoyl aspartate and inorganic phosphate, the committed step in the de novo pyrimidine nucleotide biosynthesis pathway. The sequence is that of Aspartate carbamoyltransferase catalytic subunit from Lactobacillus acidophilus (strain ATCC 700396 / NCK56 / N2 / NCFM).